The sequence spans 125 residues: Small ribosomal subunit protein uS12m (125 aa).

The interval 1-51 (MPTKNQLIRHGREEKRRTDRTRALDQCPQKQGVCPRVSTRTPKKPNSAPRK) is disordered. Positions 10–23 (HGREEKRRTDRTRA) are enriched in basic and acidic residues.

This sequence belongs to the universal ribosomal protein uS12 family.

The protein localises to the mitochondrion. In terms of biological role, protein S12 is involved in the translation initiation step. This is Small ribosomal subunit protein uS12m (RPS12) from Nicotiana sylvestris (Wood tobacco).